The chain runs to 296 residues: Nucleotide-binding protein Pnuc_1915 (296 aa).

8–15 (GISGSGKS) contacts ATP. 57-60 (DARR) contributes to the GTP binding site.

It belongs to the RapZ-like family.

Functionally, displays ATPase and GTPase activities. The polypeptide is Nucleotide-binding protein Pnuc_1915 (Polynucleobacter asymbioticus (strain DSM 18221 / CIP 109841 / QLW-P1DMWA-1) (Polynucleobacter necessarius subsp. asymbioticus)).